A 386-amino-acid chain; its full sequence is MPNWLLPESIADVLPSEARKIEELRRRMLDLFRTYGYELVMPPMLEYIESLLSGTGHDLDLKTFKLVDQLSGRTIGLRADITPQVARIDAHLLNRAGVTRLCYAGSVLHTRPSGFHVTREPLQIGAEIYGHAGLEADLEIQDLMLAALSAAGLADVRLDLCHVGVLAALLAQAPVAPDVQDELFAALASKDAPALHALTAGLPAAQRDAINLLPSLYGGVDVLARARAQLPQLPAIGRALDDLATLAAHAGGAAVNIDLADLRGYHYHSGVMFAAYVAGVPNAVARGGRYDKVGEAFGRARPATGFSLDLREVAGISPVQARAAAIHAPWSGDAKLREAIAGLRATGEIVIQSLPGHPEDLEEFAYDRQLAEEGGRWVVKPRKASA.

The protein belongs to the class-II aminoacyl-tRNA synthetase family. HisZ subfamily. As to quaternary structure, heteromultimer composed of HisG and HisZ subunits.

The protein localises to the cytoplasm. Its pathway is amino-acid biosynthesis; L-histidine biosynthesis; L-histidine from 5-phospho-alpha-D-ribose 1-diphosphate: step 1/9. Functionally, required for the first step of histidine biosynthesis. May allow the feedback regulation of ATP phosphoribosyltransferase activity by histidine. This is ATP phosphoribosyltransferase regulatory subunit from Ralstonia nicotianae (strain ATCC BAA-1114 / GMI1000) (Ralstonia solanacearum).